The following is a 533-amino-acid chain: Flavin-dependent halogenase armH4 (533 aa).

Residues G16, A19, and E49 each contribute to the FAD site. Residues S337 and G338 each coordinate chloride. FAD is bound at residue V339.

The protein belongs to the flavin-dependent halogenase family.

It carries out the reaction melleolide F + FADH2 + chloride + O2 = 6'-chloromelleolide F + FAD + 2 H2O + H(+). It catalyses the reaction melleolide F + bromide + FADH2 + O2 = 6'-bromomelleolide F + FAD + 2 H2O. In terms of biological role, flavin-dependent halogenase involved in the biosynthesis of melleolides, a range of antifungal and phytotoxic polyketide derivatives composed of an orsellinic acid (OA) moiety esterified to various sesquiterpene alcohols. The halogenase catalyzes the transfer of a single chlorine atom to the melleolide backbone, resulting in a 6'-chloromelleolide product. The enzyme acts on free substrate and does not depend on carrier-protein-dependent acceptor molecules. Can also catalyze the transfer of a single bromine atom to the melleolide backbone in vitro. The sequence is that of Flavin-dependent halogenase armH4 from Armillaria mellea (Honey mushroom).